The following is a 261-amino-acid chain: MLKTRIIPCLDVAEGRTVKGVNFVDLIDAGDPVEQARAYDLAGADELCFLDIKATHENRGTMYDLATRTAEQCFMPLTIGGGVRTVDDVRNLLLAGADKVSFNSAAVADPDCVARAADKFGSQCIVVAIDAKTVRPPAPLRGDPGRWEIFTHGGRKPTGIDAVEFAKTVVAKGAGEILLTSMDRDGTKAGFNLPLTRAVSDAVPVPVIASGGVGTLDHLVEGVTQGGASAVLAASIFHFGTYTIGEAKAHMAKAGIPVRLT.

Catalysis depends on residues aspartate 11 and aspartate 130.

The protein belongs to the HisA/HisF family. As to quaternary structure, heterodimer of HisH and HisF.

It is found in the cytoplasm. The enzyme catalyses 5-[(5-phospho-1-deoxy-D-ribulos-1-ylimino)methylamino]-1-(5-phospho-beta-D-ribosyl)imidazole-4-carboxamide + L-glutamine = D-erythro-1-(imidazol-4-yl)glycerol 3-phosphate + 5-amino-1-(5-phospho-beta-D-ribosyl)imidazole-4-carboxamide + L-glutamate + H(+). The protein operates within amino-acid biosynthesis; L-histidine biosynthesis; L-histidine from 5-phospho-alpha-D-ribose 1-diphosphate: step 5/9. In terms of biological role, IGPS catalyzes the conversion of PRFAR and glutamine to IGP, AICAR and glutamate. The HisF subunit catalyzes the cyclization activity that produces IGP and AICAR from PRFAR using the ammonia provided by the HisH subunit. The polypeptide is Imidazole glycerol phosphate synthase subunit HisF (Jannaschia sp. (strain CCS1)).